We begin with the raw amino-acid sequence, 182 residues long: uncharacterized protein (182 aa).

Positions 40 to 182 are disordered; it reads LLKTDDDDDD…EEIQRNQKGN (143 aa). The span at 52-86 shows a compositional bias: low complexity; sequence NNININNNNATITTTSTTTTTTTTSTTKTFTISTD. Acidic residues predominate over residues 87–100; sequence NYDEDVNDDQDEGD. Composition is skewed to low complexity over residues 104-134 and 148-157; these read NNNN…NNNN and DLDFNNQNNN. A compositionally biased stretch (basic and acidic residues) spans 165-182; sequence FLSKDDNIEEIQRNQKGN.

This is an uncharacterized protein from Dictyostelium discoideum (Social amoeba).